A 106-amino-acid chain; its full sequence is MNDSEFHRLADALWLTIEERLDNWDGDSDIDCEINGGVLTLSFENGSKIIINRQEPLHQVWLATKQGGYHFDLKGDEWVCDRSGETFWDLLEQAATQQAGEKVSFR.

Belongs to the frataxin family.

Involved in iron-sulfur (Fe-S) cluster assembly. May act as a regulator of Fe-S biogenesis. This Salmonella dublin (strain CT_02021853) protein is Iron-sulfur cluster assembly protein CyaY.